The primary structure comprises 44 residues: Conotoxin Rg11a (44 aa).

Disulfide bonds link Cys1–Cys15, Cys8–Cys22, Cys14–Cys30, and Cys21–Cys36.

In terms of tissue distribution, expressed by the venom duct.

It localises to the secreted. Its function is as follows. Neurotoxin. Elicits hypersensibility when injected intracranially in mice. May act via potassium channel currents. This is Conotoxin Rg11a from Conus regius (Crown cone).